The chain runs to 457 residues: Non-structural protein V (457 aa).

Disordered stretches follow at residues 26–104 and 193–403; these read KTYG…DPDD and FVPK…MPIK. 2 stretches are compositionally biased toward polar residues: residues 28–37 and 77–96; these read YGRSSIQQPS and DLSSVTSSDGTIGQRVSNTR. The segment covering 240-252 has biased composition (acidic residues); it reads SDDEDENQLEYED. Ser-257 is modified (phosphoserine; by host). Over residues 296–317 the composition is skewed to basic and acidic residues; that stretch reads FPEKEETPDVRRKDSLMQDSCK. Ser-350 is modified (phosphoserine; by host). Zn(2+) contacts are provided by His-406, Cys-425, Cys-429, Cys-441, Cys-443, Cys-446, Cys-450, and Cys-453.

This sequence belongs to the paramyxoviruses V protein family. Interacts with host IFIH1/MDA5, DHX58/LGP2, STAT1 and STAT2.

Its subcellular location is the host cytoplasm. Its function is as follows. Plays an essential role in the inhibition of host immune response. Prevents the establishment of cellular antiviral state by blocking interferon-alpha/beta (IFN-alpha/beta) production and signaling pathway. Interacts with host IFIH1/MDA5 and DHX58/LGP2 to inhibit the transduction pathway involved in the activation of IFN-beta promoter, thus protecting the virus against cell antiviral state. Blocks the type I interferon signaling pathway by interacting with host STAT1 and STAT2 and thereby inhibiting their phosphorylation and subsequent nuclear translocation. Efficiently blocks the type II interferon signaling pathway. The sequence is that of Non-structural protein V (P/V/C) from Hendra virus (isolate Horse/Autralia/Hendra/1994).